Here is a 609-residue protein sequence, read N- to C-terminus: Sulfite reductase [NADPH] flavoprotein alpha-component (609 aa).

The region spanning 72–210 (ITLISASQTG…LAAQWRRQLV (139 aa)) is the Flavodoxin-like domain. FMN contacts are provided by residues 78–83 (SQTGNA) and 125–128 (STQG). Residues 244–458 (SSPLQATFAV…IEHNDNFRLP (215 aa)) enclose the FAD-binding FR-type domain. FAD-binding positions include threonine 332, glutamine 366, 396 to 399 (RLYS), 414 to 416 (TVG), tyrosine 420, and 429 to 432 (GGAS). NADP(+) is bound by residues 529-530 (SR), 535-539 (KIYVQ), and aspartate 571. Tyrosine 609 serves as a coordination point for FAD.

Belongs to the NADPH-dependent sulphite reductase flavoprotein subunit CysJ family. The protein in the N-terminal section; belongs to the flavodoxin family. It in the C-terminal section; belongs to the flavoprotein pyridine nucleotide cytochrome reductase family. As to quaternary structure, alpha(8)-beta(8). The alpha component is a flavoprotein, the beta component is a hemoprotein. FAD serves as cofactor. It depends on FMN as a cofactor.

It carries out the reaction hydrogen sulfide + 3 NADP(+) + 3 H2O = sulfite + 3 NADPH + 4 H(+). The protein operates within sulfur metabolism; hydrogen sulfide biosynthesis; hydrogen sulfide from sulfite (NADPH route): step 1/1. In terms of biological role, component of the sulfite reductase complex that catalyzes the 6-electron reduction of sulfite to sulfide. This is one of several activities required for the biosynthesis of L-cysteine from sulfate. The flavoprotein component catalyzes the electron flow from NADPH -&gt; FAD -&gt; FMN to the hemoprotein component. The polypeptide is Sulfite reductase [NADPH] flavoprotein alpha-component (Pectobacterium atrosepticum (strain SCRI 1043 / ATCC BAA-672) (Erwinia carotovora subsp. atroseptica)).